The primary structure comprises 670 residues: Solute carrier organic anion transporter family member 1A4 (670 aa).

At 1 to 20 (MGKSEKEVATHGVRCFSKIK) the chain is on the cytoplasmic side. The chain crosses the membrane as a helical span at residues 21-40 (AFLLALTCAYVSKSLSGTYM). Over 41-59 (NSMLTQIERQFGIPTSVVG) the chain is Extracellular. A helical membrane pass occupies residues 60-80 (LINGSFEIGNLLLIIFVSYFG). Residues 81 to 86 (TKLHRP) are Cytoplasmic-facing. The helical transmembrane segment at 87–111 (IMIGVGCAVMGLGCFLISIPHFLMG) threads the bilayer. Over 112-155 (RYEYETTILPTSNLSSNSFVCTENRTQTLKPTQDPTECVKEMKS) the chain is Extracellular. N-linked (GlcNAc...) asparagine glycans are attached at residues Asn-124 and Asn-135. Residues 156–184 (LMWIYVLVGNIIRGMGETPIMPLGISYIE) form a helical membrane-spanning segment. Residues 185–203 (DFAKSENSPLYIGILETGM) are Cytoplasmic-facing. The chain crosses the membrane as a helical span at residues 204 to 224 (TIGPLIGLLLGSSCANIYVDT). Topologically, residues 225 to 242 (GSVNTDDLTITPTDTRWV) are extracellular. A helical membrane pass occupies residues 243–267 (GAWWIGFLVCAGVNILTSIPFFFFP). Topologically, residues 268–311 (KTLLKEGLQDNGDGTENAKEEKHREKIKEENRGITKDFFLFMKS) are cytoplasmic. A helical membrane pass occupies residues 312-333 (LSCNPIYMIFILISVIQVNAFI). The Extracellular portion of the chain corresponds to 334-353 (NSFTFMPKYLEQQYGKSTAE). Residues 354–377 (IVFLMGLYMLPPICLGYLIGGLIM) form a helical membrane-spanning segment. The Cytoplasmic portion of the chain corresponds to 378–381 (KKFK). A helical membrane pass occupies residues 382–405 (ITVKKAAYIGFWLSLTEYLLSFVS). Residues 406-513 (YIMTCDNFPV…PECANKLQYF (108 aa)) lie on the Extracellular side of the membrane. In terms of domain architecture, Kazal-like spans 433–488 (NNVLADCNTKCSCLTNTWDPVCGDNGLSYMSACLAGCEKSVGTGTNMVFQNCSCIQ). 3 disulfides stabilise this stretch: Cys-439-Cys-469, Cys-445-Cys-465, and Cys-454-Cys-486. N-linked (GlcNAc...) asparagine glycosylation is found at Asn-483 and Asn-492. The chain crosses the membrane as a helical span at residues 514-536 (LIISIIGCFIFSLGAIPGYMVLL). The Cytoplasmic portion of the chain corresponds to 537–545 (RCMKSEEKS). Residues 546–571 (LGVGLHTFCMRILGGIPAPIYFGALI) form a helical membrane-spanning segment. The Extracellular portion of the chain corresponds to 572-605 (DRTCLHWGTLKCGEPGACRMYDINSFRRIYLGLP). Residues 606 to 623 (AALRGASFLPALFILILM) form a helical membrane-spanning segment. The Cytoplasmic segment spans residues 624–670 (RKFQFPGDIDSSDTDPAEMKLTAKESKCTNVHRSPTMQNDGERKTKL). Phosphoserine is present on residues Ser-634 and Ser-635. The interval 649–670 (SKCTNVHRSPTMQNDGERKTKL) is disordered. The segment covering 651–662 (CTNVHRSPTMQN) has biased composition (polar residues).

Belongs to the organo anion transporter (TC 2.A.60) family. In terms of tissue distribution, highly expressed in brain and liver. Detected at very low levels in heart and lung.

The protein resides in the cell membrane. The catalysed reaction is estrone 3-sulfate(out) = estrone 3-sulfate(in). It catalyses the reaction taurocholate(out) = taurocholate(in). The enzyme catalyses prostaglandin E2(out) = prostaglandin E2(in). It carries out the reaction L-thyroxine(out) = L-thyroxine(in). Its function is as follows. Mediates the Na(+)-independent transport of organic anions such as taurocholate, cholate, 17-beta-glucuronosyl estradiol, prostaglandin E2, estrone 3-sulfate, L-thyroxine (T4), the cardiac glycosides ouabain and digoxin and thyroid hormones. Shows a pH-sensitive substrate specificity which may be ascribed to the protonation state of the binding site and leads to a stimulation of substrate transport in an acidic microenvironment. Hydrogencarbonate/HCO3(-) acts as the probable counteranion that exchanges for organic anions. This is Solute carrier organic anion transporter family member 1A4 (Slco1a4) from Mus musculus (Mouse).